Reading from the N-terminus, the 594-residue chain is Glomulin (594 aa).

Residue Ala2 is modified to N-acetylalanine. The tract at residues 2-553 (AVEELQSIIK…EEIPNMPPEM (552 aa)) is alpha-helical region with structural similarity to HEAT repeats. Residues 300–594 (IDQLPMVLSP…STSEENIGIK (295 aa)) are important for interaction with RBX1.

In terms of assembly, interacts with FKBP4 and FKBP1A. Isoform 1: Interacts with RBX1 (via RING domain). Identified in complexes that contain RBX1 plus one of the cullins CUL1, CUL2, CUL3, and CUL4A. Identified in a SCF complex composed of CUL1, RBX1, SKP1, FBXW7 and GLMN. Component of a SCF-like complex consisting of CUL7, RBX1, SKP1, FBXW8 and GLMN. Interacts with unphosphorylated MET and is released upon MET phosphorylation. In terms of processing, phosphorylated on tyrosine residues. As to expression, ubiquitous.

Regulatory component of cullin-RING-based SCF (SKP1-Cullin-F-box protein) E3 ubiquitin-protein ligase complexes. Inhibits E3 ubiquitin ligase activity by binding to RBX1 (via RING domain) and inhibiting its interaction with the E2 ubiquitin-conjugating enzyme CDC34. Inhibits RBX1-mediated neddylation of CUL1. Required for normal stability and normal cellular levels of key components of SCF ubiquitin ligase complexes, including FBXW7, RBX1, CUL1, CUL2, CUL3, CUL4A, and thereby contributes to the regulation of CCNE1 and MYC levels. Essential for normal development of the vasculature. Contributes to the regulation of RPS6KB1 phosphorylation. This Homo sapiens (Human) protein is Glomulin (GLMN).